The chain runs to 332 residues: Decaprenyl-phosphate phosphoribosyltransferase (332 aa).

Residues 1 to 12 (MSEHAAEHHRDT) show a composition bias toward basic and acidic residues. Residues 1 to 36 (MSEHAAEHHRDTQNFLTSEPHTTAIEDNKKRQPPKN) are disordered. 2 helical membrane-spanning segments follow: residues 50–70 (WVKNVLVLAAPLAAGADAIFN) and 74–94 (IIDVAIAFVVFCFGASAIYLV). 5-phospho-alpha-D-ribose 1-diphosphate contacts are provided by Lys-52 and Tyr-92. Mg(2+) is bound by residues Asn-95 and Asp-99. Lys-109 is a 5-phospho-alpha-D-ribose 1-diphosphate binding site. The next 2 membrane-spanning stretches (helical) occupy residues 114 to 134 (IAAGVLPVGMAYGMAVALIAL) and 146 to 166 (VALACVIGVYIALQLGYCFGW). The 5-phospho-alpha-D-ribose 1-diphosphate site is built by Lys-167 and Arg-184. The next 2 helical transmembrane spans lie at 169-189 (MPVIDIALVSSGFMLRAMAGG) and 190-210 (VAAGIELSQWFLLVAAFGSLF). A trans,octa-cis-decaprenyl phosphate-binding site is contributed by Lys-215. Helical transmembrane passes span 244 to 264 (FVWTMAATAVVMSYALWGFDL), 273 to 293 (PWYQISMVPFTIAILRYAAGV), and 310 to 330 (VLQVLALAWVFCIVMAVYIMP).

It belongs to the UbiA prenyltransferase family. DPPR synthase subfamily. It depends on Mg(2+) as a cofactor.

The protein localises to the cell inner membrane. It catalyses the reaction trans,octa-cis-decaprenyl phosphate + 5-phospho-alpha-D-ribose 1-diphosphate + H(+) = trans,octa-cis-decaprenylphospho-beta-D-ribofuranose 5-phosphate + diphosphate. Its pathway is cell wall biogenesis; cell wall polysaccharide biosynthesis. Involved in the biosynthesis of decaprenylphosphoryl arabinose (DPA) a precursor for arabinan synthesis in mycobacterial cell wall biosynthesis. Catalyzes the transfer of a 5-phosphoribosyl residue from phosphoribose diphosphate (PRPP) to decaprenyl phosphate (DP) to form decaprenylphosphoryl-5-phosphoribose (DPPR). In Corynebacterium glutamicum (strain ATCC 13032 / DSM 20300 / JCM 1318 / BCRC 11384 / CCUG 27702 / LMG 3730 / NBRC 12168 / NCIMB 10025 / NRRL B-2784 / 534), this protein is Decaprenyl-phosphate phosphoribosyltransferase.